Consider the following 318-residue polypeptide: UDP-N-acetylenolpyruvoylglucosamine reductase (318 aa).

The region spanning 38 to 204 is the FAD-binding PCMH-type domain; the sequence is IGGICPVVVE…LGIEILLKEG (167 aa). R182 is a catalytic residue. The segment at 212 to 232 is disordered; that stretch reads SLKDKRDRRNSSQPENKKSAG. Residues 213–229 are compositionally biased toward basic and acidic residues; it reads LKDKRDRRNSSQPENKK. S233 serves as the catalytic Proton donor. E310 is a catalytic residue.

It belongs to the MurB family. The cofactor is FAD.

The protein resides in the cytoplasm. It catalyses the reaction UDP-N-acetyl-alpha-D-muramate + NADP(+) = UDP-N-acetyl-3-O-(1-carboxyvinyl)-alpha-D-glucosamine + NADPH + H(+). Its pathway is cell wall biogenesis; peptidoglycan biosynthesis. Its function is as follows. Cell wall formation. The polypeptide is UDP-N-acetylenolpyruvoylglucosamine reductase (Leptospira borgpetersenii serovar Hardjo-bovis (strain L550)).